We begin with the raw amino-acid sequence, 169 residues long: Putative ribonuclease VapC50 (169 aa).

In terms of biological role, toxic component of a type II toxin-antitoxin (TA) system. An RNase. The cognate antitoxin is VapB50. This is Putative ribonuclease VapC50 from Mycobacterium tuberculosis (strain ATCC 25618 / H37Rv).